The chain runs to 461 residues: MSVRIEHDTFGEIEVPADKYWGAQTERSKRNFPVGKERMPIEVVYGFAQLKRAAALANFDLGKLSEAKKDAIVYACDQILSGELDEHFPLVVWQTGSGTQSNMNVNEVVSYVANMYLKDHQIDESIHPNDDVNESQSSNDTFPTAMHVALYQEVETKLEPALKLLRNTLKEKEDKFESIIKIGRTHLQDATPIKLGQEISGWRYMLDRCEIMLSESKKHILNLAIGGTAVGTGINAHPEFGDKVAHYISENTGYPFVSSENKFHALTAHDEVVQLHGTLKALAGDLMKIANDVRWLASGPRAGLAEISIPENEPGSSIMPGKVNPTQCEMLTMVAVQVMGNDTVVGFASSQGNFELNVYKPVIMHNTLQSIYLLADGMETFNNNCAVGIEPIEENIDNYLNQSLMLVTALNPHIGYEKAAQIAKKAHKEGLTLKESAIQTGYVTEEQFEAWIKPEDMVDPH.

Residues 97–99, 127–130, 137–139, and Thr-185 each bind substrate; these read SGT, HPND, and SSN. Catalysis depends on His-186, which acts as the Proton donor/acceptor. Residue Ser-316 is part of the active site. Substrate contacts are provided by residues Ser-317 and 322–324; that span reads KVN.

It belongs to the class-II fumarase/aspartase family. Fumarase subfamily. As to quaternary structure, homotetramer.

The protein localises to the cytoplasm. It carries out the reaction (S)-malate = fumarate + H2O. It participates in carbohydrate metabolism; tricarboxylic acid cycle; (S)-malate from fumarate: step 1/1. Involved in the TCA cycle. Catalyzes the stereospecific interconversion of fumarate to L-malate. This Staphylococcus aureus (strain Mu50 / ATCC 700699) protein is Fumarate hydratase class II.